The following is a 234-amino-acid chain: Glycerol-3-phosphate acyltransferase (234 aa).

A run of 6 helical transmembrane segments spans residues 4-24 (LLAI…LIAG), 56-76 (TVTL…VAFF), 90-110 (VALR…TVFA), 122-142 (AGML…VFLL), 152-172 (VASI…KYLF), and 191-211 (FHDS…IAII).

This sequence belongs to the PlsY family. In terms of assembly, probably interacts with PlsX.

The protein resides in the cell inner membrane. The catalysed reaction is an acyl phosphate + sn-glycerol 3-phosphate = a 1-acyl-sn-glycero-3-phosphate + phosphate. It participates in lipid metabolism; phospholipid metabolism. In terms of biological role, catalyzes the transfer of an acyl group from acyl-phosphate (acyl-PO(4)) to glycerol-3-phosphate (G3P) to form lysophosphatidic acid (LPA). This enzyme utilizes acyl-phosphate as fatty acyl donor, but not acyl-CoA or acyl-ACP. The protein is Glycerol-3-phosphate acyltransferase of Chlorobium chlorochromatii (strain CaD3).